The sequence spans 137 residues: Bombinin-like peptides 1 (137 aa).

Residues 1 to 18 (MNFKYIVAVSILIASAYA) form the signal peptide. Asn70 is modified (asparagine amide). A disordered region spans residues 91 to 112 (LDSFEHPEEASEKETRGFNQEE). Residue Ile118 is modified to D-allo-isoleucine. Ile136 carries the post-translational modification Isoleucine amide.

This sequence belongs to the bombinin family. Expressed by the skin glands.

The protein localises to the secreted. In terms of biological role, has antimicrobial activity, but no hemolytic activity. Preliminary evidence indicates that this peptide does not lyse and thus kill the bacteria by its antimicrobial activity. Bombinin H has antibacterial and hemolytic activity. The protein is Bombinin-like peptides 1 of Bombina variegata (Yellow-bellied toad).